The following is a 212-amino-acid chain: ER lumen protein-retaining receptor 2 (212 aa).

Residues 1–4 (MNVF) are Lumenal-facing. A helical transmembrane segment spans residues 5–24 (RLSGDLCHLAAIIILLLKIW). Residues 25–32 (NSRSCAGI) lie on the Cytoplasmic side of the membrane. Residues 33 to 52 (SGKSQLLFAMVFTTRYLDLF) traverse the membrane as a helical segment. Residues 47-48 (RY) form an interaction with the K-D-E-L motif on target proteins region. Residues 53-58 (TSFISL) lie on the Lumenal side of the membrane. The helical transmembrane segment at 59-79 (YNTSMKVIYMGCAYATVYLIY) threads the bilayer. Residues 80-92 (MKFKATYDGNHDT) lie on the Cytoplasmic side of the membrane. The helical transmembrane segment at 93–110 (FRVEFLVVPVGGLSVLVN) threads the bilayer. Residues 111–116 (HDFSPL) lie on the Lumenal side of the membrane. Residues 117 to 135 (EILWTFSIYLESVAILPQL) traverse the membrane as a helical segment. Over 136-149 (FMISKTGEAETITT) the chain is Cytoplasmic. A helical transmembrane segment spans residues 150 to 168 (HYLFFLGLYRALYLFNWIW). The interval 159-169 (RALYLFNWIWR) is interaction with the K-D-E-L motif on target proteins. Over 169–178 (RFSFEGFFDL) the chain is Lumenal. A helical transmembrane segment spans residues 179 to 199 (IAIVAGVVQTILYCDFFYLYV). The Cytoplasmic segment spans residues 200 to 212 (TKVLKGKKLSLPA). An important for recycling of cargo proteins with the sequence motif K-D-E-L from the Golgi to the endoplasmic reticulum region spans residues 204–207 (KGKK).

The protein belongs to the ERD2 family.

Its subcellular location is the endoplasmic reticulum membrane. The protein localises to the golgi apparatus membrane. The protein resides in the cytoplasmic vesicle. It localises to the COPI-coated vesicle membrane. Functionally, receptor for the C-terminal sequence motif K-D-E-L that is present on endoplasmic reticulum resident proteins and that mediates their recycling from the Golgi back to the endoplasmic reticulum. Binding is pH dependent, and is optimal at pH 5-5.4. In Xenopus laevis (African clawed frog), this protein is ER lumen protein-retaining receptor 2 (kdelr2).